The sequence spans 131 residues: MAQIDVDVFTAKVLSHWDWSREDRSFGDSASSPESESFDSACSSPDARSSPTAGCEHAEQQKPKVKMSMRRRMKASEREKLRMRSLAEALHQLRDYLPPGYSRRGQPLTKIQTLKYTIQYIKELSGILEQQ.

Positions E22–E79 are disordered. The span at G27–P45 shows a compositional bias: low complexity. Residues P63–M73 show a composition bias toward basic residues. The region spanning R70–L124 is the bHLH domain.

As to expression, coexpression of ntl and spt is required for expression.

The protein resides in the nucleus. Functionally, involved in specifying the paraxial, but not dorsal, mesoderm. May regulate the expression of T-box transcription factors required for mesoderm formation and differentiation. This is Mesogenin-1 (msgn1) from Danio rerio (Zebrafish).